The following is a 291-amino-acid chain: Formamidopyrimidine-DNA glycosylase (291 aa).

The active-site Schiff-base intermediate with DNA is the P2. E3 acts as the Proton donor in catalysis. The active-site Proton donor; for beta-elimination activity is K58. Residues H100, R123, and K166 each coordinate DNA. The FPG-type zinc-finger motif lies at 257–291 (SVYGREGKECLQCGTPIIRILQSGRSSFYCSQCQK). The active-site Proton donor; for delta-elimination activity is R281.

The protein belongs to the FPG family. Monomer. Zn(2+) serves as cofactor.

The enzyme catalyses Hydrolysis of DNA containing ring-opened 7-methylguanine residues, releasing 2,6-diamino-4-hydroxy-5-(N-methyl)formamidopyrimidine.. It carries out the reaction 2'-deoxyribonucleotide-(2'-deoxyribose 5'-phosphate)-2'-deoxyribonucleotide-DNA = a 3'-end 2'-deoxyribonucleotide-(2,3-dehydro-2,3-deoxyribose 5'-phosphate)-DNA + a 5'-end 5'-phospho-2'-deoxyribonucleoside-DNA + H(+). Functionally, involved in base excision repair of DNA damaged by oxidation or by mutagenic agents. Acts as a DNA glycosylase that recognizes and removes damaged bases. Has a preference for oxidized purines, such as 7,8-dihydro-8-oxoguanine (8-oxoG). Has AP (apurinic/apyrimidinic) lyase activity and introduces nicks in the DNA strand. Cleaves the DNA backbone by beta-delta elimination to generate a single-strand break at the site of the removed base with both 3'- and 5'-phosphates. This chain is Formamidopyrimidine-DNA glycosylase, found in Bartonella tribocorum (strain CIP 105476 / IBS 506).